The following is a 502-amino-acid chain: Acetylcholine receptor subunit alpha-type unc-63 (502 aa).

The N-terminal stretch at 1-23 (MGPNDHGFAYILIFLLLSPPTHA) is a signal peptide. At 24–263 (NRDANRLFED…HLRRKTLFYT (240 aa)) the chain is on the extracellular side. Asparagine 136 carries N-linked (GlcNAc...) asparagine glycosylation. A disulfide bond links cysteine 151 and cysteine 165. The next 3 helical transmembrane spans lie at 264 to 284 (VNLIFPSVGISFLTALVFYLP), 293 to 313 (LCISILISLTVFFLLLVEIIP), and 326 to 346 (LLFTMVLVTLSVVVTVVTLNV). Over 347–470 (HYRSPTTHTM…WKYISVVMDR (124 aa)) the chain is Cytoplasmic. A helical membrane pass occupies residues 471–491 (IFLITFTFACAFGTVVIIARA).

The protein belongs to the ligand-gated ion channel (TC 1.A.9) family. Acetylcholine receptor (TC 1.A.9.1) subfamily. Component of nicotinic acetylcholine receptor. In muscles, composed of 2 non-alpha subunits lev-1 and unc-29, and 3 alpha subunits unc-38, unc-63 and lev-8. In cholinergic motoneurons, composed of 2 non-alpha subunits acr-2 and acr-3, and 3 alpha subunits unc-38, unc-63 and acr-12. Interacts with lev-10. In terms of tissue distribution, expressed in body wall muscles, in vulval muscles and in neurons.

It localises to the postsynaptic cell membrane. The protein resides in the cell membrane. Alpha subunit of nicotinic acetylcholine receptor (nAChR). Probably acts in cholinergic motoneurons to regulate presynaptic neurotransmitter release, thereby ensuring normal level of excitation of cholinergic motoneurons during locomotion. Involved in nAChR sensitivity to nicotine and levamisole. This Caenorhabditis elegans protein is Acetylcholine receptor subunit alpha-type unc-63 (unc-63).